Consider the following 190-residue polypeptide: Glutathione peroxidase 2 (190 aa).

Sec-40 is an active-site residue. Position 40 (Sec-40) is a non-standard amino acid, selenocysteine.

This sequence belongs to the glutathione peroxidase family. Homotetramer. In terms of tissue distribution, exclusively expressed in the stomach and small intestine.

It is found in the cytoplasm. The protein resides in the cytosol. The enzyme catalyses 2 glutathione + H2O2 = glutathione disulfide + 2 H2O. The catalysed reaction is a hydroperoxy polyunsaturated fatty acid + 2 glutathione = a hydroxy polyunsaturated fatty acid + glutathione disulfide + H2O. It carries out the reaction tert-butyl hydroperoxide + 2 glutathione = tert-butanol + glutathione disulfide + H2O. It catalyses the reaction cumene hydroperoxide + 2 glutathione = 2-phenylpropan-2-ol + glutathione disulfide + H2O. The enzyme catalyses (13S)-hydroperoxy-(9Z,11E)-octadecadienoate + 2 glutathione = (13S)-hydroxy-(9Z,11E)-octadecadienoate + glutathione disulfide + H2O. The catalysed reaction is (5S)-hydroperoxy-(6E,8Z,11Z,14Z)-eicosatetraenoate + 2 glutathione = (5S)-hydroxy-(6E,8Z,11Z,14Z)-eicosatetraenoate + glutathione disulfide + H2O. It carries out the reaction (12R)-hydroperoxy-(5Z,8Z,10E,14Z)-eicosatetraenoate + 2 glutathione = (12R)-hydroxy-(5Z,8Z,10E,14Z)-eicosatetraenoate + glutathione disulfide + H2O. It catalyses the reaction (15S)-hydroperoxy-(5Z,8Z,11Z,13E)-eicosatetraenoate + 2 glutathione = (15S)-hydroxy-(5Z,8Z,11Z,13E)-eicosatetraenoate + glutathione disulfide + H2O. Its function is as follows. Catalyzes the reduction of hydroperoxides in a glutathione-dependent manner thus regulating cellular redox homeostasis. Can reduce small soluble hydroperoxides such as H2O2, cumene hydroperoxide and tert-butyl hydroperoxide, as well as several fatty acid-derived hydroperoxides. Cannot reduce phosphatidycholine hydroperoxide. The chain is Glutathione peroxidase 2 (GPX2) from Macaca fuscata fuscata (Japanese macaque).